The sequence spans 274 residues: Transmembrane protein 106B (274 aa).

The segment covering 1 to 11 has biased composition (low complexity); sequence MGKSLSHLPLH. A disordered region spans residues 1–20; it reads MGKSLSHLPLHSSKEDAYDG. The N-myristoyl glycine moiety is linked to residue glycine 2. The Cytoplasmic segment spans residues 2–96; that stretch reads GKSLSHLPLH…QRLRPRRTKL (95 aa). Position 33 is a phosphoserine (serine 33). A helical transmembrane segment spans residues 97–117; the sequence is YVMASVFVCLLLSGLAVFFLF. The Lumenal portion of the chain corresponds to 118-274; that stretch reads PRSIDVKYIG…EYLNVLQPQQ (157 aa). Asparagine 145, asparagine 151, asparagine 164, and asparagine 183 each carry an N-linked (GlcNAc...) asparagine glycan. An intrachain disulfide couples cysteine 214 to cysteine 253. A glycan (N-linked (GlcNAc...) asparagine) is linked at asparagine 256.

It belongs to the TMEM106 family. As to quaternary structure, can form homomers. Interacts (via N-terminus) with MAP6 (via C-terminus). Interacts (via C-terminus) with the vacuolar-type ATPase subunit ATP6AP1. Interacts (via N-terminus) with AP2M1 and CLTC. Interacts with TMEM106C. In terms of assembly, (Microbial infection) Interacts with SARS coronavirus-2/SARS-CoV-2 spike protein (via RBD domain). In terms of tissue distribution, expressed in the brain, including in the frontal cortex (at protein level). Expressed in lung epithelial cells.

Its subcellular location is the late endosome membrane. The protein localises to the lysosome membrane. It localises to the cell membrane. Its function is as follows. In neurons, involved in the transport of late endosomes/lysosomes. May be involved in dendrite morphogenesis and maintenance by regulating lysosomal trafficking. May act as a molecular brake for retrograde transport of late endosomes/lysosomes, possibly via its interaction with MAP6. In motoneurons, may mediate the axonal transport of lysosomes and axonal sorting at the initial segment. It remains unclear whether TMEM106B affects the transport of moving lysosomes in the anterograde or retrograde direction in neurites and whether it is important in the sorting of lysosomes in axons or in dendrites. In neurons, may also play a role in the regulation of lysosomal size and responsiveness to stress. Required for proper lysosomal acidification. In terms of biological role, (Microbial infection) Plays a role in human coronavirus SARS-CoV-2 infection, but not in common cold coronaviruses HCoV-229E and HCoV-OC43 infections. Involved in ACE2-independent SARS-CoV-2 cell entry. Required for post-endocytic stage of virus entry, facilitates spike-mediated membrane fusion. Virus attachment and endocytosis can also be mediated by other cell surface receptors. This chain is Transmembrane protein 106B, found in Homo sapiens (Human).